A 558-amino-acid chain; its full sequence is Oligo-1,6-glucosidase (558 aa).

Positions 21, 23, 25, and 29 each coordinate Ca(2+). Asp-199 (nucleophile) is an active-site residue. Residue Glu-255 is the Proton donor of the active site.

Belongs to the glycosyl hydrolase 13 family.

It is found in the cytoplasm. The enzyme catalyses Hydrolysis of (1-&gt;6)-alpha-D-glucosidic linkages in some oligosaccharides produced from starch and glycogen by alpha-amylase, and in isomaltose.. This chain is Oligo-1,6-glucosidase (malL), found in Bacillus cereus.